The chain runs to 1435 residues: Probable ATP-dependent DNA helicase HFM1 (1435 aa).

One can recognise a Helicase ATP-binding domain in the interval 290–478; the sequence is DDLLYTDRNF…WLSDGERPAV (189 aa). ATP is bound at residue 303 to 310; it reads APTGSGKT. The DEAH box motif lies at 411–414; that stretch reads DEVH. Positions 519–720 constitute a Helicase C-terminal domain; the sequence is SVIQMYSDQK…DVNIAVEWIR (202 aa). One can recognise an SEC63 domain in the interval 777 to 1092; that stretch reads PTEAGRLMAW…GLDIQQKLTV (316 aa). The tract at residues 1109–1139 is disordered; the sequence is KSETQISHSKHSDISTIAGPNKGTTASKKPG. The C4-type zinc-finger motif lies at 1143-1158; the sequence is CNHLCKSKHTCGHDCC. Positions 1295–1315 are disordered; that stretch reads GFGNTLSSSTRGSKLPLQESK. A compositionally biased stretch (polar residues) spans 1296–1306; that stretch reads FGNTLSSSTRG.

The protein belongs to the helicase family. SKI2 subfamily. Zn(2+) is required as a cofactor. As to expression, preferentially expressed in testis and ovary.

It carries out the reaction Couples ATP hydrolysis with the unwinding of duplex DNA by translocating in the 3'-5' direction.. The catalysed reaction is ATP + H2O = ADP + phosphate + H(+). In terms of biological role, required for crossover formation and complete synapsis of homologous chromosomes during meiosis. The protein is Probable ATP-dependent DNA helicase HFM1 (HFM1) of Homo sapiens (Human).